The following is a 221-amino-acid chain: MRDAALRYPNILFDLDGTLTDPREGITRSVQFALARLGIDEPDLARLEHFIGPPLLQCFMQTYGFDEARAWEAVNHYRERFRVTGLYENRVFDGIPELLEALVGRGHTLYVATSKPGVFAREIARHFAFDRHFKAIYGSELDGTRTHKEELIRHLLDSEGLAAEHCLMIGDRMHDLLGASRNGVACIGVGYGFGSEDELRAHQPTHYCADLAALRQVLESH.

Asp-14 functions as the Nucleophile in the catalytic mechanism.

It belongs to the HAD-like hydrolase superfamily. Requires Mn(2+) as cofactor. It depends on Mg(2+) as a cofactor.

It catalyses the reaction a ribonucleoside 5'-phosphate + H2O = a ribonucleoside + phosphate. In terms of biological role, specifically dephosphorylates nucleoside 5'-monophosphates to nucleosides and inorganic phosphate. Displays high activity toward 5'-UMP and 5'-IMP, significant activity against 5'-XMP and 5'-TMP, and low activity against 5'-CMP. This Pseudomonas aeruginosa (strain ATCC 15692 / DSM 22644 / CIP 104116 / JCM 14847 / LMG 12228 / 1C / PRS 101 / PAO1) protein is 5'-nucleotidase.